We begin with the raw amino-acid sequence, 663 residues long: Inner nuclear membrane protein HEH2 (663 aa).

Disordered regions lie at residues 46-188 (QRLQ…ELPN) and 267-289 (ISET…KNIR). Positions 47 to 62 (RLQSSPEASKVRTSIQ) are enriched in polar residues. Over residues 91-123 (KTVKDENVETNKRKREQISTDNEAKMQIQEEKS) the composition is skewed to basic and acidic residues. Residue serine 123 is modified to Phosphoserine. The span at 124–134 (PKKKRKKRSSK) shows a compositional bias: basic residues. Residues 124 to 137 (PKKKRKKRSSKANK) carry the Nuclear localization signal motif. The segment covering 164-183 (EELHKKDSSDDKPRVKELPK) has biased composition (basic and acidic residues). Residues 317–337 (LFIWLWNGAIFLSIICPILFG) form a helical membrane-spanning segment.

Interacts with SRP1.

The protein localises to the nucleus inner membrane. This Saccharomyces cerevisiae (strain ATCC 204508 / S288c) (Baker's yeast) protein is Inner nuclear membrane protein HEH2 (HEH2).